Here is a 206-residue protein sequence, read N- to C-terminus: Purine nucleoside phosphorylase aq_167 (206 aa).

Residues histidine 42, cysteine 78, and histidine 93 each contribute to the Zn(2+) site.

It belongs to the purine nucleoside phosphorylase YfiH/LACC1 family. As to quaternary structure, homodimer. The cofactor is Cu(2+). Zn(2+) is required as a cofactor.

It catalyses the reaction adenosine + phosphate = alpha-D-ribose 1-phosphate + adenine. The enzyme catalyses S-methyl-5'-thioadenosine + phosphate = 5-(methylsulfanyl)-alpha-D-ribose 1-phosphate + adenine. The catalysed reaction is inosine + phosphate = alpha-D-ribose 1-phosphate + hypoxanthine. It carries out the reaction adenosine + H2O + H(+) = inosine + NH4(+). In terms of biological role, purine nucleoside enzyme that catalyzes the phosphorolysis of adenosine and inosine nucleosides, yielding D-ribose 1-phosphate and the respective free bases, adenine and hypoxanthine. Also catalyzes the phosphorolysis of S-methyl-5'-thioadenosine into adenine and S-methyl-5-thio-alpha-D-ribose 1-phosphate. Also has adenosine deaminase activity. The sequence is that of Purine nucleoside phosphorylase aq_167 from Aquifex aeolicus (strain VF5).